The chain runs to 287 residues: GTPase Era (287 aa).

The 164-residue stretch at 11-174 (RSGFVAVIGR…RSYLASSLPE (164 aa)) folds into the Era-type G domain. GTP is bound by residues 19–26 (GRTNVGKS) and 66–70 (DTPGI). Residues 205–273 (LRDELPQALA…PLTLRVKVQR (69 aa)) form the KH type-2 domain.

Belongs to the TRAFAC class TrmE-Era-EngA-EngB-Septin-like GTPase superfamily. Era GTPase family. Monomer.

It localises to the cytoplasm. The protein localises to the cell membrane. In terms of biological role, an essential GTPase that binds both GDP and GTP, with rapid nucleotide exchange. Plays a role in 16S rRNA processing and 30S ribosomal subunit biogenesis and possibly also in cell cycle regulation and energy metabolism. In Acidimicrobium ferrooxidans (strain DSM 10331 / JCM 15462 / NBRC 103882 / ICP), this protein is GTPase Era.